Consider the following 408-residue polypeptide: Acetylornithine aminotransferase (408 aa).

Residues 107 to 108 and Phe141 contribute to the pyridoxal 5'-phosphate site; that span reads GT. Arg144 contributes to the N(2)-acetyl-L-ornithine binding site. 227 to 230 lines the pyridoxal 5'-phosphate pocket; it reads DEIQ. An N6-(pyridoxal phosphate)lysine modification is found at Lys256. Thr284 provides a ligand contact to N(2)-acetyl-L-ornithine. Residue Thr285 participates in pyridoxal 5'-phosphate binding.

It belongs to the class-III pyridoxal-phosphate-dependent aminotransferase family. ArgD subfamily. As to quaternary structure, homodimer. Pyridoxal 5'-phosphate serves as cofactor.

It is found in the cytoplasm. It carries out the reaction N(2)-acetyl-L-ornithine + 2-oxoglutarate = N-acetyl-L-glutamate 5-semialdehyde + L-glutamate. It functions in the pathway amino-acid biosynthesis; L-arginine biosynthesis; N(2)-acetyl-L-ornithine from L-glutamate: step 4/4. The protein is Acetylornithine aminotransferase of Xanthomonas campestris pv. campestris (strain ATCC 33913 / DSM 3586 / NCPPB 528 / LMG 568 / P 25).